The primary structure comprises 457 residues: ATP synthase subunit beta (457 aa).

Residue 147–154 participates in ATP binding; that stretch reads GGAGVGKT.

Belongs to the ATPase alpha/beta chains family. F-type ATPases have 2 components, CF(1) - the catalytic core - and CF(0) - the membrane proton channel. CF(1) has five subunits: alpha(3), beta(3), gamma(1), delta(1), epsilon(1). CF(0) has three main subunits: a(1), b(2) and c(9-12). The alpha and beta chains form an alternating ring which encloses part of the gamma chain. CF(1) is attached to CF(0) by a central stalk formed by the gamma and epsilon chains, while a peripheral stalk is formed by the delta and b chains.

The protein resides in the cell inner membrane. The enzyme catalyses ATP + H2O + 4 H(+)(in) = ADP + phosphate + 5 H(+)(out). In terms of biological role, produces ATP from ADP in the presence of a proton gradient across the membrane. The catalytic sites are hosted primarily by the beta subunits. The protein is ATP synthase subunit beta of Pasteurella multocida (strain Pm70).